A 177-amino-acid polypeptide reads, in one-letter code: Large ribosomal subunit protein uL6 (177 aa).

Belongs to the universal ribosomal protein uL6 family. Part of the 50S ribosomal subunit.

This protein binds to the 23S rRNA, and is important in its secondary structure. It is located near the subunit interface in the base of the L7/L12 stalk, and near the tRNA binding site of the peptidyltransferase center. This Actinobacillus succinogenes (strain ATCC 55618 / DSM 22257 / CCUG 43843 / 130Z) protein is Large ribosomal subunit protein uL6.